The primary structure comprises 466 residues: Transcription factor SOX-10 (466 aa).

Residues 1–67 (MAEEQDLSEV…QQDGEADDDK (67 aa)) form a disordered region. Over residues 23–32 (LSPGSAPSLG) the composition is skewed to low complexity. Ser-24 carries the phosphoserine modification. Residues 62 to 102 (EADDDKFPVCIREAVSQVLSGYDWTLVPMPVRVNGASKSKP) are dimerization (DIM). Residues 104–172 (VKRPMNAFMV…QHKKDHPDYK (69 aa)) constitute a DNA-binding region (HMG box). The Nuclear export signal motif lies at 134–145 (LSKTLGKLWRLL). Basic and acidic residues-rich tracts occupy residues 160–173 (LRMQHKKDHPDYKY) and 254–271 (ADPKRDGRSMGEGGKPHI). Disordered regions lie at residues 160-199 (LRMQHKKDHPDYKYQPRRRKNGKAAQGEAECPGGEAEQGG), 212-274 (LDHR…IDFG), 354-375 (AQVKTETAGPQGPPHYTDQPST), and 433-466 (RPLYTAISDPSPSGPQSHSPTHWEQPVYTTLSRP). The tract at residues 228 to 310 (PEHPSGQSHG…LPPNGHPGHV (83 aa)) is transactivation domain (TAM). Residues 353–466 (KAQVKTETAG…QPVYTTLSRP (114 aa)) form a transactivation domain (TAC) region. Residues 440–466 (SDPSPSGPQSHSPTHWEQPVYTTLSRP) show a composition bias toward polar residues.

Monomer. Interacts with ARMCX3 at the mitochondrial outer membrane surface. Interacts with PAX3. In terms of tissue distribution, expressed in fetal brain and in adult brain, heart, small intestine and colon.

The protein localises to the cytoplasm. Its subcellular location is the nucleus. The protein resides in the mitochondrion outer membrane. Functionally, transcription factor that plays a central role in developing and mature glia. Specifically activates expression of myelin genes, during oligodendrocyte (OL) maturation, such as DUSP15 and MYRF, thereby playing a central role in oligodendrocyte maturation and CNS myelination. Once induced, MYRF cooperates with SOX10 to implement the myelination program. Transcriptional activator of MITF, acting synergistically with PAX3. Transcriptional activator of MBP, via binding to the gene promoter. This chain is Transcription factor SOX-10 (SOX10), found in Homo sapiens (Human).